The following is a 549-amino-acid chain: Glucose-6-phosphate isomerase (549 aa).

E355 serves as the catalytic Proton donor. Active-site residues include H387 and K515.

It belongs to the GPI family.

It is found in the cytoplasm. The catalysed reaction is alpha-D-glucose 6-phosphate = beta-D-fructose 6-phosphate. It participates in carbohydrate biosynthesis; gluconeogenesis. The protein operates within carbohydrate degradation; glycolysis; D-glyceraldehyde 3-phosphate and glycerone phosphate from D-glucose: step 2/4. Functionally, catalyzes the reversible isomerization of glucose-6-phosphate to fructose-6-phosphate. The polypeptide is Glucose-6-phosphate isomerase (Histophilus somni (strain 2336) (Haemophilus somnus)).